A 66-amino-acid polypeptide reads, in one-letter code: Muscarinic toxin 4 (66 aa).

Cystine bridges form between Cys3–Cys24, Cys17–Cys42, Cys46–Cys58, and Cys59–Cys64.

This sequence belongs to the three-finger toxin family. Short-chain subfamily. Aminergic toxin sub-subfamily. In terms of assembly, monomer. As to expression, expressed by the venom gland.

It is found in the secreted. In terms of biological role, binds to the muscarinic acetylcholine receptor (CHRM). The protein is Muscarinic toxin 4 of Dendroaspis angusticeps (Eastern green mamba).